The following is a 418-amino-acid chain: Probable aminotransferase Rv1178 (418 aa).

The interval 22 to 42 (GQGWHDRERPASGQGSGAAER) is disordered.

This sequence belongs to the class-I pyridoxal-phosphate-dependent aminotransferase family. Pyridoxal 5'-phosphate serves as cofactor.

This Mycobacterium tuberculosis (strain ATCC 25618 / H37Rv) protein is Probable aminotransferase Rv1178.